Here is a 67-residue protein sequence, read N- to C-terminus: UPF0337 protein msl9551 (67 aa).

This sequence belongs to the UPF0337 (CsbD) family.

The sequence is that of UPF0337 protein msl9551 from Mesorhizobium japonicum (strain LMG 29417 / CECT 9101 / MAFF 303099) (Mesorhizobium loti (strain MAFF 303099)).